Reading from the N-terminus, the 98-residue chain is Small ribosomal subunit protein bS6 (98 aa).

It belongs to the bacterial ribosomal protein bS6 family.

Binds together with bS18 to 16S ribosomal RNA. This Lacticaseibacillus paracasei (strain ATCC 334 / BCRC 17002 / CCUG 31169 / CIP 107868 / KCTC 3260 / NRRL B-441) (Lactobacillus paracasei) protein is Small ribosomal subunit protein bS6.